A 423-amino-acid chain; its full sequence is Histidine--tRNA ligase (423 aa).

The protein belongs to the class-II aminoacyl-tRNA synthetase family. As to quaternary structure, homodimer.

It is found in the cytoplasm. It catalyses the reaction tRNA(His) + L-histidine + ATP = L-histidyl-tRNA(His) + AMP + diphosphate + H(+). The protein is Histidine--tRNA ligase of Rhodococcus jostii (strain RHA1).